Consider the following 324-residue polypeptide: NADH-ubiquinone oxidoreductase chain 1 (324 aa).

The next 8 membrane-spanning stretches (helical) occupy residues 9-29 (LTMALSYAVPILIAVAFLTLV), 75-95 (ILFIATPILALLLAITIWIPL), 106-126 (LGLLFLLSMSSLAVYSILWSG), 142-162 (VAQTISYEVTLAIILLSVIML), 177-197 (PLYLIFSTWPLAMMWYISTLA), 228-248 (LFFLAEYANIMLMNTLTAILF), 259-279 (ELFPLILATKTLLLSSGFLWV), and 300-320 (LPLTLALCLWHTSLPISYAGI).

Belongs to the complex I subunit 1 family.

It localises to the mitochondrion inner membrane. The enzyme catalyses a ubiquinone + NADH + 5 H(+)(in) = a ubiquinol + NAD(+) + 4 H(+)(out). Core subunit of the mitochondrial membrane respiratory chain NADH dehydrogenase (Complex I) that is believed to belong to the minimal assembly required for catalysis. Complex I functions in the transfer of electrons from NADH to the respiratory chain. The immediate electron acceptor for the enzyme is believed to be ubiquinone. This chain is NADH-ubiquinone oxidoreductase chain 1 (MT-ND1), found in Struthio camelus (Common ostrich).